A 417-amino-acid chain; its full sequence is Serine--tRNA ligase (417 aa).

225 to 227 (TLE) contributes to the L-serine binding site. Residue 256–258 (RQE) participates in ATP binding. Residue E279 participates in L-serine binding. 343–346 (EVSS) is an ATP binding site. T379 serves as a coordination point for L-serine.

This sequence belongs to the class-II aminoacyl-tRNA synthetase family. Type-1 seryl-tRNA synthetase subfamily. Homodimer. The tRNA molecule binds across the dimer.

The protein localises to the cytoplasm. The catalysed reaction is tRNA(Ser) + L-serine + ATP = L-seryl-tRNA(Ser) + AMP + diphosphate + H(+). The enzyme catalyses tRNA(Sec) + L-serine + ATP = L-seryl-tRNA(Sec) + AMP + diphosphate + H(+). It functions in the pathway aminoacyl-tRNA biosynthesis; selenocysteinyl-tRNA(Sec) biosynthesis; L-seryl-tRNA(Sec) from L-serine and tRNA(Sec): step 1/1. Its function is as follows. Catalyzes the attachment of serine to tRNA(Ser). Is also able to aminoacylate tRNA(Sec) with serine, to form the misacylated tRNA L-seryl-tRNA(Sec), which will be further converted into selenocysteinyl-tRNA(Sec). The chain is Serine--tRNA ligase from Mycoplasma genitalium (strain ATCC 33530 / DSM 19775 / NCTC 10195 / G37) (Mycoplasmoides genitalium).